The primary structure comprises 391 residues: Histidinol-phosphate aminotransferase (391 aa).

K246 carries the N6-(pyridoxal phosphate)lysine modification.

Belongs to the class-II pyridoxal-phosphate-dependent aminotransferase family. Histidinol-phosphate aminotransferase subfamily. Requires pyridoxal 5'-phosphate as cofactor.

It catalyses the reaction L-histidinol phosphate + 2-oxoglutarate = 3-(imidazol-4-yl)-2-oxopropyl phosphate + L-glutamate. The protein operates within amino-acid biosynthesis; L-histidine biosynthesis; L-histidine from 5-phospho-alpha-D-ribose 1-diphosphate: step 7/9. The protein is Histidinol-phosphate aminotransferase of Methanopyrus kandleri (strain AV19 / DSM 6324 / JCM 9639 / NBRC 100938).